The primary structure comprises 346 residues: Growth hormone-inducible transmembrane protein (346 aa).

A mitochondrion-targeting transit peptide spans 1 to 45 (MLAARLVCLRTLPSRVFQPTFITKASPLVKNSITKNQWLVTPSRE). At 46 to 83 (YATKTRIRTHRGKTGQELKEAALEPSMEKIFKIDQMGR) the chain is on the mitochondrial matrix side. Residues 84 to 104 (WFVAGGAAVGLGALCYYGLGM) form a helical membrane-spanning segment. Topologically, residues 105 to 126 (SNEIGAIEKAVIWPQYVKDRIH) are mitochondrial intermembrane. A helical membrane pass occupies residues 127 to 147 (STYMYLAGSIGLTALSALAVA). The Mitochondrial matrix segment spans residues 148–160 (RTPALMNFMMTGS). The chain crosses the membrane as a helical span at residues 161–181 (WVTIGATFAAMIGAGMLVHSI). The Mitochondrial intermembrane segment spans residues 182–191 (SYEQSPGPKH). A helical transmembrane segment spans residues 192–212 (LAWMLHSGVMGAVVAPLTILG). Over 213 to 214 (GP) the chain is Mitochondrial matrix. The chain crosses the membrane as a helical span at residues 215 to 235 (LLLRAAWYTAGIVGGLSTVAM). Over 236–245 (CAPSEKFLNM) the chain is Mitochondrial intermembrane. Residues 246–266 (GAPLGVGLGLVFASSLGSMFL) form a helical membrane-spanning segment. The Mitochondrial matrix portion of the chain corresponds to 267-272 (PPTSVA). The chain crosses the membrane as a helical span at residues 273 to 293 (GATLYSVAMYGGLVLFSMFLL). The Mitochondrial intermembrane segment spans residues 294–346 (YDTQKVIKRAEITPMYGAQKYDPINSMLTIYMDTLNIFMRVATMLATGSNRKK).

It belongs to the BI1 family. Interacts with LETM1 and AFG3L2. Post-translationally, undergoes AFG3L2-mediated proteolytic degradation, upon hyperpolarization of mitochondria.

It is found in the mitochondrion inner membrane. The catalysed reaction is Ca(2+)(in) + 2 H(+)(out) = Ca(2+)(out) + 2 H(+)(in). The enzyme catalyses K(+)(in) + H(+)(out) = K(+)(out) + H(+)(in). Its function is as follows. Plays an important role in maintenance of mitochondrial morphology and in mediating either calcium or potassium/proton antiport. Mediates proton-dependent calcium efflux from mitochondrion. Also functions as an electroneutral mitochondrial proton/potassium exchanger. Required for the mitochondrial tubular network and cristae organization. Involved in apoptotic release of cytochrome c. Inhibits AFG3L2 proteolytic activity, stimulating respiration and stabilizing respiratory enzymes in actively respiring mitochondria. However, when mitochondria become hyperpolarized, GHITM loses its inhibitory activity toward AFG3L2 and the now active AFG3L2 turns first on GHITM and, if hyperpolarization persists, on other proteins of the mitochondria, leading to a broad remodeling of the mitochondrial proteome. The protein is Growth hormone-inducible transmembrane protein (Ghitm) of Mus musculus (Mouse).